Consider the following 345-residue polypeptide: Glycerol-3-phosphate dehydrogenase [NAD(P)+] (345 aa).

Residues Ser-11, Trp-12, Arg-32, Arg-33, and Lys-105 each coordinate NADPH. Lys-105, Gly-136, and Ser-138 together coordinate sn-glycerol 3-phosphate. Ala-140 contributes to the NADPH binding site. Positions 191, 244, 254, 255, and 256 each coordinate sn-glycerol 3-phosphate. Lys-191 acts as the Proton acceptor in catalysis. Arg-255 provides a ligand contact to NADPH. NADPH-binding residues include Val-279 and Glu-281.

The protein belongs to the NAD-dependent glycerol-3-phosphate dehydrogenase family.

Its subcellular location is the cytoplasm. It carries out the reaction sn-glycerol 3-phosphate + NAD(+) = dihydroxyacetone phosphate + NADH + H(+). It catalyses the reaction sn-glycerol 3-phosphate + NADP(+) = dihydroxyacetone phosphate + NADPH + H(+). Its pathway is membrane lipid metabolism; glycerophospholipid metabolism. Its function is as follows. Catalyzes the reduction of the glycolytic intermediate dihydroxyacetone phosphate (DHAP) to sn-glycerol 3-phosphate (G3P), the key precursor for phospholipid synthesis. This Halalkalibacterium halodurans (strain ATCC BAA-125 / DSM 18197 / FERM 7344 / JCM 9153 / C-125) (Bacillus halodurans) protein is Glycerol-3-phosphate dehydrogenase [NAD(P)+].